A 134-amino-acid polypeptide reads, in one-letter code: Putative oxidoreductase CatD (134 aa).

Transmembrane regions (helical) follow at residues 5 to 25 (FEIG…VHGL), 46 to 66 (FMAY…FFGL), 70 to 90 (IVGV…KLKA), and 91 to 111 (PFMG…HLAL).

The protein belongs to the DoxX family.

The protein localises to the cell membrane. Functionally, essential for growth and viability in the presence of catechol and probably involved in the detoxification of catechol. The protein is Putative oxidoreductase CatD (catD) of Bacillus subtilis (strain 168).